The sequence spans 61 residues: Short neurotoxin 1 (61 aa).

4 disulfides stabilise this stretch: cysteine 3/cysteine 23, cysteine 17/cysteine 40, cysteine 42/cysteine 53, and cysteine 54/cysteine 59.

This sequence belongs to the three-finger toxin family. Short-chain subfamily. Type I alpha-neurotoxin sub-subfamily. As to expression, expressed by the venom gland.

The protein resides in the secreted. Its function is as follows. Binds to muscle nicotinic acetylcholine receptor (nAChR) and inhibit acetylcholine from binding to the receptor, thereby impairing neuromuscular transmission. This Naja samarensis (Peters' cobra) protein is Short neurotoxin 1.